The chain runs to 151 residues: MEKEKNKKTSSLNVLSIAGLQPYQKKIDEEYMNKDQILHFYKILETWKTQLQDEINHTLLYIQDNATNFPDPIDRATQEEEFSLDLRNRDRSRKLIKKIEITLKKIKEKDFGYCNSCSVEIGIRRLEARPTADLCIDCKTLAEIREKQMTG.

Positions 114, 117, 135, and 138 each coordinate Zn(2+). The dksA C4-type zinc-finger motif lies at C114–C138.

The protein belongs to the DksA family. In terms of assembly, interacts directly with the RNA polymerase.

The protein localises to the cytoplasm. In terms of biological role, transcription factor that acts by binding directly to the RNA polymerase (RNAP). Required for negative regulation of rRNA expression and positive regulation of several amino acid biosynthesis promoters. Also required for regulation of fis expression. This is RNA polymerase-binding transcription factor DksA from Buchnera aphidicola subsp. Acyrthosiphon pisum (strain APS) (Acyrthosiphon pisum symbiotic bacterium).